A 108-amino-acid chain; its full sequence is UPF0145 protein alr2488 (108 aa).

The protein belongs to the UPF0145 family.

This chain is UPF0145 protein alr2488, found in Nostoc sp. (strain PCC 7120 / SAG 25.82 / UTEX 2576).